A 549-amino-acid chain; its full sequence is MKDVIYITGHKNPDSDSICAALAYAEFKNKTQDTPAIPVRLGNVSQETQYILDYFGVEAPQFLETVKLKVEDLEMDKIAPLAPEVSLKMAWNIMRDKNLKSIPVADGNNHLLGMLSTSNITATYMDIWDSNILAKSATSLDNILDTLSAEAQNINEERKVFPGKVVVAAMQAESLKEFISEGDIAIAGDRAEIQAELIELKVSLLIVTGGHTPSKEIIELAKKNNITVITTPHDSFTASRLIVQSLPVDYVMTKDNLVAVSTDDLVEDVKVTMSETRYSNYPVIDENNKVVGSIARFHLISTHKKKVIQVDHNERGQSVHGLEDAEVLEIIDHHRVADIQTGNPIYFRNEPLGSTSTIVAKRFFENGIRPSREAAGLLCGAIISDTLLFKSPTCTPQDVKMCRKLAEIAGIVPETFAKEMFKAGTSLKGKSIEEIFNADFKPFTIEGVKVGVAQVNTMDIEGFMPLKGEMLDYMNQKAESMGLEMIMLLLTDIINEGSQILVAGRSPEIAEEAFKVKLEDSTTFLPGVLSRKKQVVPPLTQIITTRVSK.

CBS domains are found at residues 74 to 130 and 252 to 310; these read EMDK…IWDS and MTKD…VIQV. AMP-binding positions include Lys100, 116–119, Thr253, Val258, and 278–280; these read STSN and YSN.

It belongs to the PPase family. As to quaternary structure, homodimer. Co(2+) is required as a cofactor. Mn(2+) serves as cofactor. Requires Mg(2+) as cofactor.

The catalysed reaction is diphosphate + H2O = 2 phosphate + H(+). With respect to regulation, inhibited by AMP and ADP with 25% and 35% of activity remaining, respectively, at saturating conditions. Activated 5-fold by diadenosine polyphosphates(Ap[n]A) with n&gt;2 (Ap3A, Ap4A, Ap5A, Ap6A) at saturating conditions. This is Cobalt-dependent inorganic pyrophosphatase from Clostridium perfringens (strain 13 / Type A).